Reading from the N-terminus, the 798-residue chain is Protocadherin beta-13 (798 aa).

The N-terminal stretch at 1–28 is a signal peptide; that stretch reads MEASGKLICRQRQVLFSFLLLGLSLAGA. Topologically, residues 29–690 are extracellular; that stretch reads AEPRSYSVVE…AQADLLTVYL (662 aa). 5 consecutive Cadherin domains span residues 36–134, 139–243, 248–348, 353–451, and 456–561; these read VVEE…SPVF, MLVK…APEF, YRVQ…APEV, FTSP…APAF, and YTLF…SPFV. N-linked (GlcNAc...) asparagine glycosylation is found at asparagine 418 and asparagine 436. Asparagine 567 carries N-linked (GlcNAc...) asparagine glycosylation. The 104-residue stretch at 568 to 671 folds into the Cadherin 6 domain; that stretch reads GSAPCTELVP…LVDGFSQPYL (104 aa). The chain crosses the membrane as a helical span at residues 691–711; sequence VVALASVSSLFLFSVLLFVAV. Over 712 to 798 the chain is Cytoplasmic; the sequence is RLCRRSRAAS…FPNNFGFNIQ (87 aa).

It localises to the cell membrane. In terms of biological role, potential calcium-dependent cell-adhesion protein. May be involved in the establishment and maintenance of specific neuronal connections in the brain. This chain is Protocadherin beta-13 (PCDHB13), found in Homo sapiens (Human).